Here is a 636-residue protein sequence, read N- to C-terminus: Biosynthetic arginine decarboxylase (636 aa).

Lysine 101 carries the post-translational modification N6-(pyridoxal phosphate)lysine. 286–296 serves as a coordination point for substrate; sequence FDVGGGLAVDY.

This sequence belongs to the Orn/Lys/Arg decarboxylase class-II family. SpeA subfamily. Mg(2+) is required as a cofactor. Pyridoxal 5'-phosphate serves as cofactor.

The enzyme catalyses L-arginine + H(+) = agmatine + CO2. It participates in amine and polyamine biosynthesis; agmatine biosynthesis; agmatine from L-arginine: step 1/1. Its function is as follows. Catalyzes the biosynthesis of agmatine from arginine. This is Biosynthetic arginine decarboxylase from Shewanella amazonensis (strain ATCC BAA-1098 / SB2B).